We begin with the raw amino-acid sequence, 127 residues long: Small ribosomal subunit protein uS11 (127 aa).

This sequence belongs to the universal ribosomal protein uS11 family. In terms of assembly, part of the 30S ribosomal subunit. Interacts with proteins S7 and S18. Binds to IF-3.

Located on the platform of the 30S subunit, it bridges several disparate RNA helices of the 16S rRNA. Forms part of the Shine-Dalgarno cleft in the 70S ribosome. The chain is Small ribosomal subunit protein uS11 from Streptococcus gordonii (strain Challis / ATCC 35105 / BCRC 15272 / CH1 / DL1 / V288).